Reading from the N-terminus, the 92-residue chain is Large ribosomal subunit protein bL34m (92 aa).

The N-terminal 46 residues, 1–46, are a transit peptide targeting the mitochondrion; the sequence is MAFLARCFGCQACRSVALLSGRYLQSRVWMGLPDSWPLLSLQQARG. Residue S71 is modified to Phosphoserine.

The protein belongs to the bacterial ribosomal protein bL34 family. Component of the mitochondrial ribosome large subunit (39S) which comprises a 16S rRNA and about 50 distinct proteins.

Its subcellular location is the mitochondrion. In Mus musculus (Mouse), this protein is Large ribosomal subunit protein bL34m (Mrpl34).